Here is a 394-residue protein sequence, read N- to C-terminus: RAB6A-GEF complex partner protein 2 (394 aa).

The protein belongs to the RGP1 family. As to quaternary structure, forms a complex with RIC1; the interaction enhances RAB6A GTPase activity. Interacts with RIC1. Interacts with RAB6A; the interaction is direct with a preference for RAB6A-GDP. Interacts with RAB33B.

It localises to the cytoplasm. It is found in the cytosol. The protein localises to the membrane. The RIC1-RGP1 complex acts as a guanine nucleotide exchange factor (GEF), which activates RAB6A by exchanging bound GDP for free GTP and may thereby required for efficient fusion of endosome-derived vesicles with the Golgi compartment. The RIC1-RGP1 complex participates in the recycling of mannose-6-phosphate receptors. In Bos taurus (Bovine), this protein is RAB6A-GEF complex partner protein 2.